Consider the following 935-residue polypeptide: Coatomer subunit gamma (935 aa).

5 HEAT repeats span residues 258–296 (PQLF…RNSR), 337–372 (PEKI…TGTS), 373–410 (KNIS…NFPQ), 412–449 (WKSI…FVPQ), and 524–562 (PTLY…ARNK). A disordered region spans residues 630 to 656 (KSETTLDTTPEAESVPEKRADANSFAG). Threonine 638 carries the post-translational modification Phosphothreonine. Phosphoserine is present on serine 643. A Glycyl lysine isopeptide (Lys-Gly) (interchain with G-Cter in ubiquitin) cross-link involves residue lysine 647. Phosphoserine is present on serine 653.

The protein belongs to the COPG family. In terms of assembly, oligomeric complex that consists of at least the alpha, beta, beta', gamma, delta, epsilon and zeta subunits. Interacts (via C-terminus) with GEA1 (via N-terminal region) and KEI1 (via C-terminal region).

It localises to the cytoplasm. It is found in the golgi apparatus membrane. The protein resides in the cytoplasmic vesicle. The protein localises to the COPI-coated vesicle membrane. Its subcellular location is the endosome. The coatomer is a cytosolic protein complex that binds to dilysine motifs and reversibly associates with Golgi non-clathrin-coated vesicles, which further mediate biosynthetic protein transport from the ER, via the Golgi up to the trans Golgi network. Coatomer complex is required for budding from Golgi membranes, and is essential for the retrograde Golgi-to-ER transport of dilysine-tagged proteins. In Saccharomyces cerevisiae (strain ATCC 204508 / S288c) (Baker's yeast), this protein is Coatomer subunit gamma (SEC21).